Consider the following 318-residue polypeptide: NADH-ubiquinone oxidoreductase chain 1 (318 aa).

A run of 8 helical transmembrane segments spans residues 2-22 (FMIN…FLTL), 76-96 (TLAL…YPLI), 102-122 (LLFI…SGWA), 146-166 (LAII…STLI), 171-191 (YLWL…STLA), 217-237 (AGPF…MNAL), 253-273 (ETYT…FLWV), and 294-314 (LPLT…ASCI).

The protein belongs to the complex I subunit 1 family. Core subunit of respiratory chain NADH dehydrogenase (Complex I) which is composed of 45 different subunits.

It is found in the mitochondrion inner membrane. The catalysed reaction is a ubiquinone + NADH + 5 H(+)(in) = a ubiquinol + NAD(+) + 4 H(+)(out). Core subunit of the mitochondrial membrane respiratory chain NADH dehydrogenase (Complex I) which catalyzes electron transfer from NADH through the respiratory chain, using ubiquinone as an electron acceptor. Essential for the catalytic activity and assembly of complex I. This is NADH-ubiquinone oxidoreductase chain 1 (MT-ND1) from Lemur catta (Ring-tailed lemur).